The primary structure comprises 229 residues: Potassium/proton antiporter CemA (229 aa).

Transmembrane regions (helical) follow at residues 7 to 27, 107 to 127, and 189 to 209; these read FTPL…SFSV, ILHF…SILG, and IISG…KYWI.

Belongs to the CemA family.

The protein localises to the plastid. The protein resides in the chloroplast inner membrane. The catalysed reaction is K(+)(in) + H(+)(out) = K(+)(out) + H(+)(in). Its function is as follows. Contributes to K(+)/H(+) antiport activity by supporting proton efflux to control proton extrusion and homeostasis in chloroplasts in a light-dependent manner to modulate photosynthesis. Prevents excessive induction of non-photochemical quenching (NPQ) under continuous-light conditions. Indirectly promotes efficient inorganic carbon uptake into chloroplasts. In Nicotiana sylvestris (Wood tobacco), this protein is Potassium/proton antiporter CemA.